The chain runs to 441 residues: Membrane-bound protease PH1510 (441 aa).

Residues 1 to 20 form the signal peptide; that stretch reads MRRILLSMIVLIFLASPILA. Residue 64 to 67 coordinates substrate; it reads GGRA. The Nucleophile role is filled by serine 97. 119–124 provides a ligand contact to substrate; sequence ACRPIL. Lysine 138 functions as the Proton donor/acceptor in the catalytic mechanism. The next 4 helical transmembrane spans lie at 239 to 259, 271 to 291, 307 to 327, and 344 to 364; these read VAYL…LTPG, IILA…ILLI, FGLF…LLFG, and ILII…MAAV.

This sequence belongs to the peptidase S14 family. Homodimer.

It localises to the membrane. With respect to regulation, inhibited by divalent metal cations, including Mg(2+), Mn(2+), Ca(2+) and Zn(2+). Mildly inhibited by 0.01 % SDS and 0.1% dodecyl-beta-D-maltoside. Activity is nearly abolished by 1 % SDS. Functionally, protease that cleaves its substrates preferentially near hydrophobic or aromatic amino acid residues. Can degrade casein and the stomatin homolog PH1511 (in vitro). This Pyrococcus horikoshii (strain ATCC 700860 / DSM 12428 / JCM 9974 / NBRC 100139 / OT-3) protein is Membrane-bound protease PH1510.